A 318-amino-acid polypeptide reads, in one-letter code: Trans-prenyltransferase (318 aa).

Residues 1–21 form a helical membrane-spanning segment; it reads MLHLIYISIIVVLIIILISYT. Isopentenyl diphosphate contacts are provided by Lys85, Arg88, and His122. Asp129 and Asp135 together coordinate Mg(2+). Dimethylallyl diphosphate is bound at residue Arg140. Arg141 lines the isopentenyl diphosphate pocket. Positions 216, 217, and 254 each coordinate dimethylallyl diphosphate.

It belongs to the FPP/GGPP synthase family. Asfivirus trans-prenyltransferase subfamily. Requires Mg(2+) as cofactor.

It localises to the host endoplasmic reticulum. It is found in the host membrane. The catalysed reaction is isopentenyl diphosphate + dimethylallyl diphosphate = (2E)-geranyl diphosphate + diphosphate. It carries out the reaction isopentenyl diphosphate + (2E)-geranyl diphosphate = (2E,6E)-farnesyl diphosphate + diphosphate. It catalyses the reaction isopentenyl diphosphate + (2E,6E)-farnesyl diphosphate = (2E,6E,10E)-geranylgeranyl diphosphate + diphosphate. The enzyme catalyses isopentenyl diphosphate + (2E,6E,10E)-geranylgeranyl diphosphate = (2E,6E,10E,14E)-geranylfarnesyl diphosphate + diphosphate. The protein operates within isoprenoid biosynthesis; farnesyl diphosphate biosynthesis; farnesyl diphosphate from geranyl diphosphate and isopentenyl diphosphate: step 1/1. It participates in isoprenoid biosynthesis; geranyl diphosphate biosynthesis; geranyl diphosphate from dimethylallyl diphosphate and isopentenyl diphosphate: step 1/1. Its pathway is isoprenoid biosynthesis; geranylgeranyl diphosphate biosynthesis; geranylgeranyl diphosphate from farnesyl diphosphate and isopentenyl diphosphate: step 1/1. Its function is as follows. Trans-prenyltransferase that catalyzes the sequential condensation of isopentenyl diphosphate (IPP) with different allylic diphosphates, such as dimethylallyl diphosphate (DMAPP), geranyl diphosphate (GPP), farnesyl diphosphate (FPP) and geranylgeranyl diphosphate (GGPP), farnesyl diphosphate being the best allylic substrate. In African swine fever virus (strain Badajoz 1971 Vero-adapted) (Ba71V), this protein is Trans-prenyltransferase.